Here is a 348-residue protein sequence, read N- to C-terminus: D-alanine--D-alanine ligase (348 aa).

The ATP-grasp domain maps to 132-334 (KRVLESAGIP…YSDLIEELVS (203 aa)). 162–217 (LETLSFPIFVKPANMGSSVGISKAESIEGLREAIALALKYDSRILIEQGVVAREIE) lines the ATP pocket. The Mg(2+) site is built by D288, E301, and N303.

The protein belongs to the D-alanine--D-alanine ligase family. The cofactor is Mg(2+). Mn(2+) is required as a cofactor.

The protein localises to the cytoplasm. It catalyses the reaction 2 D-alanine + ATP = D-alanyl-D-alanine + ADP + phosphate + H(+). The protein operates within cell wall biogenesis; peptidoglycan biosynthesis. In terms of biological role, cell wall formation. The protein is D-alanine--D-alanine ligase of Streptococcus uberis (strain ATCC BAA-854 / 0140J).